The chain runs to 102 residues: Integration host factor subunit beta (102 aa).

It belongs to the bacterial histone-like protein family. Heterodimer of an alpha and a beta chain.

Its function is as follows. This protein is one of the two subunits of integration host factor, a specific DNA-binding protein that functions in genetic recombination as well as in transcriptional and translational control. The polypeptide is Integration host factor subunit beta (ihfB) (Rhizobium radiobacter (Agrobacterium tumefaciens)).